Reading from the N-terminus, the 430-residue chain is Enolase (430 aa).

Gln163 contributes to the (2R)-2-phosphoglycerate binding site. The Proton donor role is filled by Glu205. The Mg(2+) site is built by Asp242, Glu288, and Asp315. 4 residues coordinate (2R)-2-phosphoglycerate: Lys340, Arg369, Ser370, and Lys391. The Proton acceptor role is filled by Lys340.

It belongs to the enolase family. Mg(2+) is required as a cofactor.

The protein localises to the cytoplasm. The protein resides in the secreted. It localises to the cell surface. The enzyme catalyses (2R)-2-phosphoglycerate = phosphoenolpyruvate + H2O. The protein operates within carbohydrate degradation; glycolysis; pyruvate from D-glyceraldehyde 3-phosphate: step 4/5. In terms of biological role, catalyzes the reversible conversion of 2-phosphoglycerate (2-PG) into phosphoenolpyruvate (PEP). It is essential for the degradation of carbohydrates via glycolysis. The polypeptide is Enolase (Aster yellows witches'-broom phytoplasma (strain AYWB)).